Consider the following 255-residue polypeptide: Glucanase inhibitor protein 4 (255 aa).

Residues 1-21 form the signal peptide; that stretch reads MKSITTASFALILFGVGAASA. One can recognise a Peptidase S1 domain in the interval 29 to 255; that stretch reads VLGGGAVPSG…ESLGMDQLGH (227 aa). Residues C56 and C72 are joined by a disulfide bond. N-linked (GlcNAc...) asparagine glycans are attached at residues N90, N105, N110, and N160. 2 cysteine pairs are disulfide-bonded: C180/C192 and C202/C235.

The protein belongs to the peptidase S1 family. Forms an apoplastic complex with host endoglucanases in tomato leaves during P.infestans infection.

It localises to the secreted. Secreted effector that suppresses host plant glucan elicitor-mediated defense responses. Targets host endoglucanases and inhibits the endoglucanase-mediated release of elicitor-active glucan oligosaccharides from P.infestans cell walls. This is Glucanase inhibitor protein 4 from Phytophthora infestans (Potato late blight agent).